We begin with the raw amino-acid sequence, 104 residues long: Large ribosomal subunit protein uL24 (104 aa).

It belongs to the universal ribosomal protein uL24 family. As to quaternary structure, part of the 50S ribosomal subunit.

Its function is as follows. One of two assembly initiator proteins, it binds directly to the 5'-end of the 23S rRNA, where it nucleates assembly of the 50S subunit. One of the proteins that surrounds the polypeptide exit tunnel on the outside of the subunit. In Yersinia enterocolitica serotype O:8 / biotype 1B (strain NCTC 13174 / 8081), this protein is Large ribosomal subunit protein uL24.